The following is a 229-amino-acid chain: Urease accessory protein UreF (229 aa).

It belongs to the UreF family. As to quaternary structure, ureD, UreF and UreG form a complex that acts as a GTP-hydrolysis-dependent molecular chaperone, activating the urease apoprotein by helping to assemble the nickel containing metallocenter of UreC. The UreE protein probably delivers the nickel.

The protein resides in the cytoplasm. Functionally, required for maturation of urease via the functional incorporation of the urease nickel metallocenter. The protein is Urease accessory protein UreF of Staphylococcus aureus (strain JH1).